The chain runs to 225 residues: Triosephosphate isomerase (225 aa).

Position 9–11 (9–11 (NMK)) interacts with substrate. Residue His93 is the Electrophile of the active site. Glu141 functions as the Proton acceptor in the catalytic mechanism. Substrate is bound by residues Ile146, Gly181, and 202 to 203 (AS).

This sequence belongs to the triosephosphate isomerase family. In terms of assembly, homotetramer; dimer of dimers.

The protein resides in the cytoplasm. The catalysed reaction is D-glyceraldehyde 3-phosphate = dihydroxyacetone phosphate. It functions in the pathway carbohydrate biosynthesis; gluconeogenesis. Its pathway is carbohydrate degradation; glycolysis; D-glyceraldehyde 3-phosphate from glycerone phosphate: step 1/1. Its function is as follows. Involved in the gluconeogenesis. Catalyzes stereospecifically the conversion of dihydroxyacetone phosphate (DHAP) to D-glyceraldehyde-3-phosphate (G3P). This is Triosephosphate isomerase from Caldivirga maquilingensis (strain ATCC 700844 / DSM 13496 / JCM 10307 / IC-167).